Here is a 429-residue protein sequence, read N- to C-terminus: GTPase Obg (429 aa).

Positions 1–158 constitute an Obg domain; sequence MFYDTAKIYV…RWLLLELKLL (158 aa). Residues 159 to 329 enclose the OBG-type G domain; the sequence is ADVGLVGYPN…LIYRLWEIIS (171 aa). GTP is bound by residues 165–172, 190–194, 212–215, 282–285, and 310–312; these read GYPNAGKS, FTTLT, DIPG, NKMD, and SAL. Mg(2+) is bound by residues serine 172 and threonine 192. One can recognise an OCT domain in the interval 344–421; that stretch reads IKEQPEEGFV…IGKFEFYFVD (78 aa).

It belongs to the TRAFAC class OBG-HflX-like GTPase superfamily. OBG GTPase family. As to quaternary structure, monomer. The cofactor is Mg(2+).

It is found in the cytoplasm. Its function is as follows. An essential GTPase which binds GTP, GDP and possibly (p)ppGpp with moderate affinity, with high nucleotide exchange rates and a fairly low GTP hydrolysis rate. Plays a role in control of the cell cycle, stress response, ribosome biogenesis and in those bacteria that undergo differentiation, in morphogenesis control. This chain is GTPase Obg, found in Carboxydothermus hydrogenoformans (strain ATCC BAA-161 / DSM 6008 / Z-2901).